The primary structure comprises 314 residues: Porphobilinogen deaminase (314 aa).

At Cys249 the chain carries S-(dipyrrolylmethanemethyl)cysteine.

Belongs to the HMBS family. Monomer. It depends on dipyrromethane as a cofactor.

It carries out the reaction 4 porphobilinogen + H2O = hydroxymethylbilane + 4 NH4(+). It participates in porphyrin-containing compound metabolism; protoporphyrin-IX biosynthesis; coproporphyrinogen-III from 5-aminolevulinate: step 2/4. Tetrapolymerization of the monopyrrole PBG into the hydroxymethylbilane pre-uroporphyrinogen in several discrete steps. In Brucella anthropi (strain ATCC 49188 / DSM 6882 / CCUG 24695 / JCM 21032 / LMG 3331 / NBRC 15819 / NCTC 12168 / Alc 37) (Ochrobactrum anthropi), this protein is Porphobilinogen deaminase.